Here is a 471-residue protein sequence, read N- to C-terminus: Cysteine--tRNA ligase (471 aa).

A Zn(2+)-binding site is contributed by Cys-29. Positions 31 to 41 (PTVYNYIHIGN) match the 'HIGH' region motif. The Zn(2+) site is built by Cys-209, His-234, and Glu-238. Positions 266 to 270 (KMSKS) match the 'KMSKS' region motif. Position 269 (Lys-269) interacts with ATP.

This sequence belongs to the class-I aminoacyl-tRNA synthetase family. In terms of assembly, monomer. Zn(2+) is required as a cofactor.

The protein localises to the cytoplasm. The catalysed reaction is tRNA(Cys) + L-cysteine + ATP = L-cysteinyl-tRNA(Cys) + AMP + diphosphate. This is Cysteine--tRNA ligase from Listeria welshimeri serovar 6b (strain ATCC 35897 / DSM 20650 / CCUG 15529 / CIP 8149 / NCTC 11857 / SLCC 5334 / V8).